The following is a 149-amino-acid chain: Cytochrome c-556 (149 aa).

The N-terminal stretch at 1 to 20 is a signal peptide; it reads MLRTVIVAGALVLTASAVMA. Met-32, Cys-137, Cys-140, and His-141 together coordinate heme c.

In terms of assembly, monomer. Binds 1 heme c group covalently per subunit.

Low-spin monoheme cytochrome c. The sequence is that of Cytochrome c-556 from Rhodopseudomonas palustris (strain ATCC BAA-98 / CGA009).